Reading from the N-terminus, the 291-residue chain is MKDYLVKALAFDGEVRAYSVRTTNTVSEAQRRHDTWRTASAALGRSLTAGTMMGAMLKGEQKLTIKVEGNGPIGPILVDAHANGDVRGYVTNPHVDFEGTEQGKLRVYQAVGTEGFVTVIKDIGMREPFIGQSPIVSGELGEDFTYYFAVSEQTPSSVGVGVLVNGDDSILAAGGFILQIMPGAQDETISFIEDRLQKIPPVSTLIEQGLSPEELLYAVLGEDKVKVLETMDVQFNCTCSRERIESVLISLGKTELEQVREEEEETEVHCHFCNERYKFSKEDITNLIENL.

2 cysteine pairs are disulfide-bonded: Cys237–Cys239 and Cys270–Cys273.

Belongs to the HSP33 family. Under oxidizing conditions two disulfide bonds are formed involving the reactive cysteines. Under reducing conditions zinc is bound to the reactive cysteines and the protein is inactive.

Its subcellular location is the cytoplasm. Redox regulated molecular chaperone. Protects both thermally unfolding and oxidatively damaged proteins from irreversible aggregation. Plays an important role in the bacterial defense system toward oxidative stress. The protein is 33 kDa chaperonin of Bacillus cereus (strain B4264).